We begin with the raw amino-acid sequence, 603 residues long: Elongation factor 4 (603 aa).

One can recognise a tr-type G domain in the interval 7 to 189; that stretch reads VRIRNFCIIA…AVVERIPPPP (183 aa). Residues 19–24 and 136–139 each bind GTP; these read DHGKST and NKID.

The protein belongs to the TRAFAC class translation factor GTPase superfamily. Classic translation factor GTPase family. LepA subfamily.

Its subcellular location is the cell inner membrane. The enzyme catalyses GTP + H2O = GDP + phosphate + H(+). Functionally, required for accurate and efficient protein synthesis under certain stress conditions. May act as a fidelity factor of the translation reaction, by catalyzing a one-codon backward translocation of tRNAs on improperly translocated ribosomes. Back-translocation proceeds from a post-translocation (POST) complex to a pre-translocation (PRE) complex, thus giving elongation factor G a second chance to translocate the tRNAs correctly. Binds to ribosomes in a GTP-dependent manner. This chain is Elongation factor 4, found in Nostoc punctiforme (strain ATCC 29133 / PCC 73102).